Consider the following 204-residue polypeptide: UPF0637 protein SAS1041 (204 aa).

The protein belongs to the UPF0637 family.

The chain is UPF0637 protein SAS1041 from Staphylococcus aureus (strain MSSA476).